The primary structure comprises 289 residues: Serine/threonine-protein phosphatase PGAM5, mitochondrial (289 aa).

The Mitochondrial matrix segment spans residues 1-6 (MAFRQA). The helical transmembrane segment at 7-29 (LQLAACGLAGGSAAVLFSAVAVG) threads the bilayer. The Mitochondrial intermembrane segment spans residues 30-289 (KPRAGGDAEP…FMPPDKITRS (260 aa)). Positions 32–59 (RAGGDAEPRPAEPPAWAGGARPGPGVWD) are disordered. The span at 45–56 (PAWAGGARPGPG) shows a compositional bias: low complexity. Residues 77–82 (NVESGE) form an interaction with KEAP1 region. Phosphoserine occurs at positions 80 and 87. N6-acetyllysine occurs at positions 116, 144, and 191.

It belongs to the phosphoglycerate mutase family. BPG-dependent PGAM subfamily. In terms of assembly, dimer. Forms a ternary complex with NFE2L2 and KEAP1. Interacts with BCL2L1 and MAP3K5. Upon TNF-induced necrosis, forms in complex with RIPK1, RIPK3 and MLKL; the formation of this complex leads to PGAM5 phosphorylation. Isoform 2, but not isoform 1, interacts with DNM1L; this interaction leads to DNM1L dephosphorylation and activation and eventually to mitochondria fragmentation. Both isoform 1 and isoform 2 are phosphorylated by the RIPK1/RIPK3 complex under necrotic conditions. This phosphorylation increases PGAM5 phosphatase activity. Post-translationally, proteolytically cleaved by PARL in response to loss of mitochondrial membrane potential.

Its subcellular location is the mitochondrion outer membrane. It localises to the mitochondrion inner membrane. It catalyses the reaction O-phospho-L-seryl-[protein] + H2O = L-seryl-[protein] + phosphate. The catalysed reaction is O-phospho-L-threonyl-[protein] + H2O = L-threonyl-[protein] + phosphate. Mitochondrial serine/threonine phosphatase that dephosphorylates various substrates and thus plays a role in different biological processes including cellular senescence or mitophagy. Modulates cellular senescence by regulating mitochondrial dynamics. Mechanistically, participates in mitochondrial fission through dephosphorylating DNM1L/DRP1. Additionally, dephosphorylates MFN2 in a stress-sensitive manner and consequently protects it from ubiquitination and degradation to promote mitochondrial network formation. Regulates mitophagy independent of PARKIN by interacting with and dephosphorylating FUNDC1, which interacts with LC3. Regulates anti-oxidative response by forming a tertiary complex with KEAP1 and NRF2. Regulates necroptosis by acting as a RIPK3 target and recruiting the RIPK1-RIPK3-MLKL necrosis 'attack' complex to mitochondria. This Homo sapiens (Human) protein is Serine/threonine-protein phosphatase PGAM5, mitochondrial (PGAM5).